A 333-amino-acid polypeptide reads, in one-letter code: Tryptophan--tRNA ligase (333 aa).

Residues 11 to 13 (QPS) and 19 to 20 (GN) contribute to the ATP site. The 'HIGH' region signature appears at 12 to 20 (PSGELTIGN). D135 provides a ligand contact to L-tryptophan. Residues 147 to 149 (GED), V186, and 195 to 199 (KMSKS) contribute to the ATP site. The 'KMSKS' region signature appears at 195-199 (KMSKS).

It belongs to the class-I aminoacyl-tRNA synthetase family. In terms of assembly, homodimer.

It is found in the cytoplasm. The enzyme catalyses tRNA(Trp) + L-tryptophan + ATP = L-tryptophyl-tRNA(Trp) + AMP + diphosphate + H(+). Its function is as follows. Catalyzes the attachment of tryptophan to tRNA(Trp). In Pasteurella multocida (strain Pm70), this protein is Tryptophan--tRNA ligase.